We begin with the raw amino-acid sequence, 250 residues long: UDP-2,3-diacylglucosamine hydrolase (250 aa).

Mn(2+) is bound by residues Asp8, His10, Asp41, Asn79, and His114. Residue 79-80 participates in substrate binding; that stretch reads NR. Residues Asp122, Ser160, Asp172, Gln175, and His203 each contribute to the substrate site. His203 and His205 together coordinate Mn(2+).

This sequence belongs to the LpxH family. Requires Mn(2+) as cofactor.

It is found in the cell inner membrane. It carries out the reaction UDP-2-N,3-O-bis[(3R)-3-hydroxytetradecanoyl]-alpha-D-glucosamine + H2O = 2-N,3-O-bis[(3R)-3-hydroxytetradecanoyl]-alpha-D-glucosaminyl 1-phosphate + UMP + 2 H(+). Its pathway is glycolipid biosynthesis; lipid IV(A) biosynthesis; lipid IV(A) from (3R)-3-hydroxytetradecanoyl-[acyl-carrier-protein] and UDP-N-acetyl-alpha-D-glucosamine: step 4/6. Hydrolyzes the pyrophosphate bond of UDP-2,3-diacylglucosamine to yield 2,3-diacylglucosamine 1-phosphate (lipid X) and UMP by catalyzing the attack of water at the alpha-P atom. Involved in the biosynthesis of lipid A, a phosphorylated glycolipid that anchors the lipopolysaccharide to the outer membrane of the cell. In Xylella fastidiosa (strain M12), this protein is UDP-2,3-diacylglucosamine hydrolase.